The sequence spans 242 residues: Biosynthetic peptidoglycan transglycosylase (242 aa).

Residues 19-39 (LMVVLAVFWAGGIALFSVAPV) traverse the membrane as a helical segment.

It belongs to the glycosyltransferase 51 family.

It localises to the cell inner membrane. The catalysed reaction is [GlcNAc-(1-&gt;4)-Mur2Ac(oyl-L-Ala-gamma-D-Glu-L-Lys-D-Ala-D-Ala)](n)-di-trans,octa-cis-undecaprenyl diphosphate + beta-D-GlcNAc-(1-&gt;4)-Mur2Ac(oyl-L-Ala-gamma-D-Glu-L-Lys-D-Ala-D-Ala)-di-trans,octa-cis-undecaprenyl diphosphate = [GlcNAc-(1-&gt;4)-Mur2Ac(oyl-L-Ala-gamma-D-Glu-L-Lys-D-Ala-D-Ala)](n+1)-di-trans,octa-cis-undecaprenyl diphosphate + di-trans,octa-cis-undecaprenyl diphosphate + H(+). It participates in cell wall biogenesis; peptidoglycan biosynthesis. Peptidoglycan polymerase that catalyzes glycan chain elongation from lipid-linked precursors. The sequence is that of Biosynthetic peptidoglycan transglycosylase from Shigella boydii serotype 4 (strain Sb227).